The sequence spans 296 residues: 4-hydroxybenzoate octaprenyltransferase (296 aa).

The next 8 helical transmembrane spans lie at 29-49, 52-72, 103-123, 151-171, 176-196, 220-240, 243-263, and 275-295; these read AGWL…AGGF, WHLL…GCCI, LVLG…TNAI, VLGV…LGEV, WLLM…YAMV, VILL…MPYV, ALFT…YTLI, and FRLN…SYAL.

It belongs to the UbiA prenyltransferase family. Mg(2+) serves as cofactor.

The protein resides in the cell inner membrane. It carries out the reaction all-trans-octaprenyl diphosphate + 4-hydroxybenzoate = 4-hydroxy-3-(all-trans-octaprenyl)benzoate + diphosphate. It participates in cofactor biosynthesis; ubiquinone biosynthesis. Catalyzes the prenylation of para-hydroxybenzoate (PHB) with an all-trans polyprenyl group. Mediates the second step in the final reaction sequence of ubiquinone-8 (UQ-8) biosynthesis, which is the condensation of the polyisoprenoid side chain with PHB, generating the first membrane-bound Q intermediate 3-octaprenyl-4-hydroxybenzoate. This chain is 4-hydroxybenzoate octaprenyltransferase, found in Albidiferax ferrireducens (strain ATCC BAA-621 / DSM 15236 / T118) (Rhodoferax ferrireducens).